Consider the following 351-residue polypeptide: Anthranilate phosphoribosyltransferase (351 aa).

Residues glycine 84, glycine 87 to aspartate 88, asparagine 95 to serine 98, lysine 113 to serine 121, and alanine 125 contribute to the 5-phospho-alpha-D-ribose 1-diphosphate site. Glycine 84 provides a ligand contact to anthranilate. Position 97 (serine 97) interacts with Mg(2+). Asparagine 116 contacts anthranilate. Position 171 (arginine 171) interacts with anthranilate. Residues aspartate 229 and lysine 230 each coordinate Mg(2+).

It belongs to the anthranilate phosphoribosyltransferase family. Homodimer. Mg(2+) serves as cofactor.

The catalysed reaction is N-(5-phospho-beta-D-ribosyl)anthranilate + diphosphate = 5-phospho-alpha-D-ribose 1-diphosphate + anthranilate. Its pathway is amino-acid biosynthesis; L-tryptophan biosynthesis; L-tryptophan from chorismate: step 2/5. In terms of biological role, catalyzes the transfer of the phosphoribosyl group of 5-phosphorylribose-1-pyrophosphate (PRPP) to anthranilate to yield N-(5'-phosphoribosyl)-anthranilate (PRA). In Clavibacter michiganensis subsp. michiganensis (strain NCPPB 382), this protein is Anthranilate phosphoribosyltransferase.